The primary structure comprises 484 residues: UDP-N-acetylmuramoyl-L-alanyl-D-glutamate--L-lysine ligase (484 aa).

S43 lines the UDP-N-acetyl-alpha-D-muramoyl-L-alanyl-D-glutamate pocket. Residue 119-125 (GTKGKTT) coordinates ATP. UDP-N-acetyl-alpha-D-muramoyl-L-alanyl-D-glutamate-binding positions include 161–162 (TT), S188, and R196. K230 bears the N6-carboxylysine mark. The L-lysine recognition motif signature appears at 405–408 (DDPN).

The protein belongs to the MurCDEF family. MurE subfamily. In terms of processing, carboxylation is probably crucial for Mg(2+) binding and, consequently, for the gamma-phosphate positioning of ATP.

The protein resides in the cytoplasm. The enzyme catalyses UDP-N-acetyl-alpha-D-muramoyl-L-alanyl-D-glutamate + L-lysine + ATP = UDP-N-acetyl-alpha-D-muramoyl-L-alanyl-gamma-D-glutamyl-L-lysine + ADP + phosphate + H(+). Its pathway is cell wall biogenesis; peptidoglycan biosynthesis. In terms of biological role, catalyzes the addition of L-lysine to the nucleotide precursor UDP-N-acetylmuramoyl-L-alanyl-D-glutamate (UMAG) in the biosynthesis of bacterial cell-wall peptidoglycan. The sequence is that of UDP-N-acetylmuramoyl-L-alanyl-D-glutamate--L-lysine ligase from Streptococcus agalactiae serotype Ia (strain ATCC 27591 / A909 / CDC SS700).